Consider the following 385-residue polypeptide: Chaperone protein DnaJ (385 aa).

Residues 3–68 (DYYEILGVTR…QKRAAYDRFG (66 aa)) form the J domain. Residues 135–213 (GAEVEITVPA…CHGHGQVRRE (79 aa)) form a CR-type zinc finger. Zn(2+) contacts are provided by cysteine 148, cysteine 151, cysteine 165, cysteine 168, cysteine 187, cysteine 190, cysteine 201, and cysteine 204. CXXCXGXG motif repeat units follow at residues 148 to 155 (CEVCEGSG), 165 to 172 (CGTCGGAG), 187 to 194 (CPRCGGSG), and 201 to 208 (CSNCHGHG).

Belongs to the DnaJ family. As to quaternary structure, homodimer. It depends on Zn(2+) as a cofactor.

The protein localises to the cytoplasm. Participates actively in the response to hyperosmotic and heat shock by preventing the aggregation of stress-denatured proteins and by disaggregating proteins, also in an autonomous, DnaK-independent fashion. Unfolded proteins bind initially to DnaJ; upon interaction with the DnaJ-bound protein, DnaK hydrolyzes its bound ATP, resulting in the formation of a stable complex. GrpE releases ADP from DnaK; ATP binding to DnaK triggers the release of the substrate protein, thus completing the reaction cycle. Several rounds of ATP-dependent interactions between DnaJ, DnaK and GrpE are required for fully efficient folding. Also involved, together with DnaK and GrpE, in the DNA replication of plasmids through activation of initiation proteins. This chain is Chaperone protein DnaJ, found in Caulobacter vibrioides (strain ATCC 19089 / CIP 103742 / CB 15) (Caulobacter crescentus).